Reading from the N-terminus, the 397-residue chain is RNA polymerase II elongation factor ELL3 (397 aa).

Disordered stretches follow at residues 164–219 (VSDP…KRSV) and 237–284 (VPSP…PEDI). A compositionally biased stretch (polar residues) spans 168-178 (LASNQGQSLPG). Residues 250–262 (QEGEDWEQEDEDM) show a composition bias toward acidic residues. The span at 269–281 (SSSVQEDSESPSP) shows a compositional bias: low complexity. The OCEL domain maps to 285–395 (PDYLLQYRAI…LILEFEEKNR (111 aa)).

This sequence belongs to the ELL/occludin family. As to quaternary structure, interacts with AFF4. Component of the super elongation complex (SEC), at least composed of EAF1, EAF2, CDK9, MLLT3/AF9, AFF (AFF1 or AFF4), the P-TEFb complex and ELL (ELL, ELL2 or ELL3). Component of the little elongation complex (LEC), at least composed of ELL (ELL, ELL2 or ELL3), ZC3H8, ICE1 and ICE2. Testis specific.

The protein localises to the nucleus. In terms of biological role, enhancer-binding elongation factor that specifically binds enhancers in embryonic stem cells (ES cells), marks them, and is required for their future activation during stem cell specification. Does not only bind to enhancer regions of active genes, but also marks the enhancers that are in a poised or inactive state in ES cells and is required for establishing proper RNA polymerase II occupancy at developmentally regulated genes in a cohesin-dependent manner. Probably required for priming developmentally regulated genes for later recruitment of the super elongation complex (SEC), for transcriptional activation during differentiation. Required for recruitment of P-TEFb within SEC during differentiation. Probably preloaded on germ cell chromatin, suggesting that it may prime gene activation by marking enhancers as early as in the germ cells. Promoting epithelial-mesenchymal transition (EMT). Elongation factor component of the super elongation complex (SEC), a complex required to increase the catalytic rate of RNA polymerase II transcription by suppressing transient pausing by the polymerase at multiple sites along the DNA. Component of the little elongation complex (LEC), a complex required to regulate small nuclear RNA (snRNA) gene transcription by RNA polymerase II and III. The protein is RNA polymerase II elongation factor ELL3 (ELL3) of Homo sapiens (Human).